Consider the following 469-residue polypeptide: MAKTLYDKLWDDHTVHVEEDGTTLLYIDRHLLHEVTSPQAFEGLKIAERPVWRISANLAVSDHNVPTTDRSEGIADPVSKLQVDTLDANCDSFGITQFKMNDHRQGIVHVIGPEQGATLPGMTVVCGDSHTSTHGAFGALAHGIGTSEVEHVLATQTLLGKKAKNMLVKVEGKLPRGCTAKDIVLAIIGKIGTAGGTGYTIEFAGSAIRDLTMEGRMTVCNMAIEAGARAGLVAVDNVTLEYVKGRPYAPQGVEWDQAVAYWSTLHSDAGASFDQVIELRAEDIRPQVTWGTSPEMVVSIEDRVPDPEKEKDPTRRNAMERALEYMNLQPNVPMESINVDKVFIGSCTNSRIEDMRAAAWVVQKLGRKVASNVKLAMVVPGSGLVKEQAEREGLDKVFKAAGFEWREPGCSMCLAMNADRLEPGERCASTSNRNFEGRQGAGGRTHLVSPAMAAAAAIEGHFVDIRKLG.

Cys-347, Cys-410, and Cys-413 together coordinate [4Fe-4S] cluster.

This sequence belongs to the aconitase/IPM isomerase family. LeuC type 1 subfamily. Heterodimer of LeuC and LeuD. Requires [4Fe-4S] cluster as cofactor.

It carries out the reaction (2R,3S)-3-isopropylmalate = (2S)-2-isopropylmalate. The protein operates within amino-acid biosynthesis; L-leucine biosynthesis; L-leucine from 3-methyl-2-oxobutanoate: step 2/4. Functionally, catalyzes the isomerization between 2-isopropylmalate and 3-isopropylmalate, via the formation of 2-isopropylmaleate. This is 3-isopropylmalate dehydratase large subunit from Cupriavidus pinatubonensis (strain JMP 134 / LMG 1197) (Cupriavidus necator (strain JMP 134)).